The following is a 529-amino-acid chain: Heat shock factor protein 1 (529 aa).

At Met1 the chain carries N-acetylmethionine. The DNA-binding domain stretch occupies residues 15–120 (VPAFLTKLWT…LLENIKRKVT (106 aa)). Position 80 is an N6-acetyllysine (Lys80). Lys91 is modified (N6-acetyllysine; alternate). Lys91 participates in a covalent cross-link: Glycyl lysine isopeptide (Lys-Gly) (interchain with G-Cter in SUMO2); alternate. N6-acetyllysine is present on Lys118. Ser121 carries the post-translational modification Phosphoserine; by MAPKAPK2. Residues Lys126 and Lys131 each participate in a glycyl lysine isopeptide (Lys-Gly) (interchain with G-Cter in SUMO2) cross-link. Residues 130–203 (IKIRQDSVTK…ISLVQSNRIL (74 aa)) are hydrophobic repeat HR-A/B. Thr142 is modified (phosphothreonine; by CK2). N6-acetyllysine is present on residues Lys150 and Lys188. The d domain stretch occupies residues 203 to 224 (LGVKRKIPLMLNDSGSAHSMPK). Lys208 bears the N6-acetyllysine; alternate mark. Lys208 is covalently cross-linked (Glycyl lysine isopeptide (Lys-Gly) (interchain with G-Cter in SUMO2); alternate). Position 216 is a phosphoserine; by PLK1 (Ser216). Positions 221–310 (SMPKYSRQFS…PPSPPQSPRV (90 aa)) are regulatory domain. Lys224 participates in a covalent cross-link: Glycyl lysine isopeptide (Lys-Gly) (interchain with G-Cter in SUMO2). Ser230 is modified (phosphoserine; by CAMK2A). Ser275 and Ser292 each carry phosphoserine. Positions 295 to 324 (VRVKEEPPSPPQSPRVEEASPGRPSSVDTL) are disordered. The residue at position 298 (Lys298) is an N6-acetyllysine; alternate. Residue Lys298 forms a Glycyl lysine isopeptide (Lys-Gly) (interchain with G-Cter in SUMO2); alternate linkage. Residue Lys298 forms a Glycyl lysine isopeptide (Lys-Gly) (interchain with G-Cter in SUMO); alternate linkage. Ser303 is modified (phosphoserine; by GSK3-beta). Ser307 is subject to Phosphoserine; by MAPK3. Phosphoserine occurs at positions 314 and 319. Ser320 carries the phosphoserine; by PKA modification. A Phosphothreonine modification is found at Thr323. At Ser326 the chain carries Phosphoserine; by MAPK12. The disordered stretch occupies residues 336 to 372 (RESEPAPASVTALTDARGHTDTEGRPPSPPPTSTPEK). Ser344 is subject to Phosphoserine. Phosphoserine; by MAPK8 is present on Ser363. The interval 371-529 (EKCLSVACLD…PPKAKDPTVS (159 aa)) is transactivation domain. Residues 384–409 (LSDHLDAMDSNLDNLQTMLSSHGFSV) form a hydrophobic repeat HR-C region. The 9aaTAD motif lies at 412–420 (SALLDLFSP). The residue at position 419 (Ser419) is a Phosphoserine; by PLK1. Ser444 carries the post-translational modification Phosphoserine. 2 disordered regions span residues 444–463 (SPQE…DSGK) and 502–529 (EGDG…PTVS). Lys524 is modified (N6-acetyllysine).

Belongs to the HSF family. As to quaternary structure, monomer; cytoplasmic latent and transcriptionally inactive monomeric form in unstressed cells. Homotrimer; in response to stress, such as heat shock, homotrimerizes and translocates into the nucleus, binds to heat shock element (HSE) sequences in promoter of heat shock protein (HSP) genes and acquires transcriptional ability. Interacts (via monomeric form) with FKBP4; this interaction occurs in unstressed cells. Associates (via monomeric form) with HSP90 proteins in a multichaperone complex in unnstressed cell; this association maintains HSF1 in a non-DNA-binding and transcriptional inactive form by preventing HSF1 homotrimerization. Homotrimeric transactivation activity is modulated by protein-protein interactions and post-translational modifications. Interacts with HSP90AA1; this interaction is decreased in a IER5-dependent manner, promoting HSF1 accumulation in the nucleus, homotrimerization and DNA-binding activities. Part (via regulatory domain in the homotrimeric form) of a large heat shock-induced HSP90-dependent multichaperone complex at least composed of FKBP4, FKBP5, HSP90 proteins, PPID, PPP5C and PTGES3; this association maintains the HSF1 homotrimeric DNA-bound form in a transcriptionally inactive form. Interacts with BAG3 (via BAG domain); this interaction occurs in normal and heat-shocked cells promoting nuclear shuttling of HSF1 in a BAG3-dependent manner. Interacts (via homotrimeric and hyperphosphorylated form) with FKBP4; this interaction occurs upon heat shock in a HSP90-dependent multichaperone complex. Interacts (via homotrimeric form preferentially) with EEF1A proteins. In heat shocked cells, stress-denatured proteins compete with HSF1 homotrimeric DNA-bound form for association of the HSP90-dependent multichaperone complex, and hence alleviating repression of HSF1-mediated transcriptional activity. Interacts (via homotrimeric form preferentially) with DAXX; this interaction relieves homotrimeric HSF1 from repression of its transcriptional activity by HSP90-dependent multichaperone complex upon heat shock. Interacts (via D domain and preferentially with hyperphosphorylated form) with JNK1; this interaction occurs under both normal growth conditions and immediately upon heat shock. Interacts (via D domain and preferentially with hyperphosphorylated form) with MAPK3; this interaction occurs upon heat shock. Interacts with IER5 (via central region); this interaction promotes PPP2CA-induced dephosphorylation on Ser-121, Ser-307, Ser-314, Thr-323 and Thr-367 and HSF1 transactivation activity. Found in a ribonucleoprotein complex composed of the HSF1 homotrimeric form, translation elongation factor eEF1A proteins and non-coding RNA heat shock RNA-1 (HSR1); this complex occurs upon heat shock and stimulates HSF1 DNA-binding activity. Interacts (via transactivation domain) with HSPA1A/HSP70 and DNAJB1; these interactions result in the inhibition of heat shock- and HSF1-induced transcriptional activity during the attenuation and recovery phase from heat shock. Interacts (via Ser-303 and Ser-307 phosphorylated form) with YWHAE; this interaction promotes HSF1 sequestration in the cytoplasm in an ERK-dependent manner. Found in a complex with IER5 and PPP2CA. Interacts with TPR; this interaction increases upon heat shock and stimulates export of HSP70 mRNA. Interacts with SYMPK (via N-terminus) and CSTF2; these interactions occur upon heat shock. Interacts (via transactivation domain) with HSPA8. Interacts with EEF1D; this interaction occurs at heat shock promoter element (HSE) sequences. Interacts with MAPKAPK2. Interacts with PRKACA/PKA. Interacts (via transactivation domain) with GTF2A2. Interacts (via transactivation domain) with GTF2B. Interacts (via transactivation domain) with TBP. Interacts with CDK9, CCNT1 and EP300. Interacts (via N-terminus) with XRCC5 (via N-terminus) and XRCC6 (via N-terminus); these interactions are direct and prevent XRCC5/XRCC6 heterodimeric binding and non-homologous end joining (NHEJ) repair activities induced by ionizing radiation (IR). Interacts with PLK1; this interaction occurs during the early mitotic period, increases upon heat shock but does not modulate neither HSF1 homotrimerization and DNA-binding activities. Interacts (via Ser-216 phosphorylated form) with CDC20; this interaction occurs in mitosis in a MAD2L1-dependent manner and prevents PLK1-stimulated degradation of HSF1 by blocking the recruitment of the SCF(BTRC) ubiquitin ligase complex. Interacts with MAD2L1; this interaction occurs in mitosis. Interacts with BTRC; this interaction occurs during mitosis, induces its ubiquitin-dependent degradation following stimulus-dependent phosphorylation at Ser-216, a process inhibited by CDC20. Interacts with HSP90AA1 and HSP90AB1. Forms a complex with TTC5/STRAP and p300/EP300; these interactions augment chromatin-bound HSF1 and p300/EP300 histone acetyltransferase activity. Post-translationally, phosphorylated. Phosphorylated in unstressed cells; this phosphorylation is constitutive and implicated in the repression of HSF1 transcriptional activity. Phosphorylated on Ser-121 by MAPKAPK2; this phosphorylation promotes interaction with HSP90 proteins and inhibits HSF1 homotrimerization, DNA-binding and transactivation activities. Phosphorylation on Ser-303 by GSK3B/GSK3-beta and on Ser-307 by MAPK3 within the regulatory domain is involved in the repression of HSF1 transcriptional activity and occurs in a RAF1-dependent manner. Phosphorylation on Ser-303 and Ser-307 increases HSF1 nuclear export in a YWHAE- and XPO1/CRM1-dependent manner. Phosphorylation on Ser-307 is a prerequisite for phosphorylation on Ser-303. According to PubMed:9535852, Ser-303 is not phosphorylated in unstressed cells. Phosphorylated on Ser-419 by PLK1; phosphorylation promotes nuclear translocation upon heat shock. Hyperphosphorylated upon heat shock and during the attenuation and recovery phase period of the heat shock response. Phosphorylated on Thr-142; this phosphorylation increases HSF1 transactivation activity upon heat shock. Phosphorylation on Ser-230 by CAMK2A; this phosphorylation enhances HSF1 transactivation activity upon heat shock. Phosphorylation on Ser-326 by MAPK12; this phosphorylation enhances HSF1 nuclear translocation, homotrimerization and transactivation activities upon heat shock. Phosphorylated on Ser-320 by PRKACA/PKA; this phosphorylation promotes nuclear localization and transcriptional activity upon heat shock. Phosphorylated on Ser-363 by MAPK8; this phosphorylation occurs upon heat shock, induces HSF1 translocation into nuclear stress bodies and negatively regulates transactivation activity. Neither basal nor stress-inducible phosphorylation on Ser-230, Ser-292, Ser-303, Ser-307, Ser-314, Ser-319, Ser-320, Thr-323, Ser-326, Ser-338, Ser-344, Ser-363, Thr-367, Ser-368 and Thr-369 within the regulatory domain is involved in the regulation of HSF1 subcellular localization or DNA-binding activity; however, it negatively regulates HSF1 transactivation activity. Phosphorylated on Ser-216 by PLK1 in the early mitotic period; this phosphorylation regulates HSF1 localization to the spindle pole, the recruitment of the SCF(BTRC) ubiquitin ligase complex inducing HSF1 degradation, and hence mitotic progression. Dephosphorylated on Ser-121, Ser-307, Ser-314, Thr-323 and Thr-367 by phosphatase PPP2CA in an IER5-dependent manner, leading to HSF1-mediated transactivation activity. In terms of processing, sumoylated with SUMO1 and SUMO2 upon heat shock in a ERK2-dependent manner. Sumoylated by SUMO1 on Lys-298; sumoylation occurs upon heat shock and promotes its localization to nuclear stress bodies and DNA-binding activity. Phosphorylation on Ser-303 and Ser-307 is probably a prerequisite for sumoylation. Acetylated on Lys-118; this acetylation is decreased in a IER5-dependent manner. Acetylated on Lys-118, Lys-208 and Lys-298; these acetylations occur in a EP300-dependent manner. Acetylated on Lys-80; this acetylation inhibits DNA-binding activity upon heat shock. Deacetylated on Lys-80 by SIRT1; this deacetylation increases DNA-binding activity. Post-translationally, ubiquitinated by SCF(BTRC) and degraded following stimulus-dependent phosphorylation at Ser-216 by PLK1 in mitosis. Polyubiquitinated. Undergoes proteasomal degradation upon heat shock and during the attenuation and recovery phase period of the heat shock response.

It is found in the nucleus. The protein localises to the cytoplasm. The protein resides in the nucleoplasm. Its subcellular location is the perinuclear region. It localises to the cytoskeleton. It is found in the spindle pole. The protein localises to the microtubule organizing center. The protein resides in the centrosome. Its subcellular location is the chromosome. It localises to the centromere. It is found in the kinetochore. Functionally, functions as a stress-inducible and DNA-binding transcription factor that plays a central role in the transcriptional activation of the heat shock response (HSR), leading to the expression of a large class of molecular chaperones, heat shock proteins (HSPs), that protect cells from cellular insult damage. In unstressed cells, is present in a HSP90-containing multichaperone complex that maintains it in a non-DNA-binding inactivated monomeric form. Upon exposure to heat and other stress stimuli, undergoes homotrimerization and activates HSP gene transcription through binding to site-specific heat shock elements (HSEs) present in the promoter regions of HSP genes. Upon heat shock stress, forms a chromatin-associated complex with TTC5/STRAP and p300/EP300 to stimulate HSR transcription, therefore increasing cell survival. Activation is reversible, and during the attenuation and recovery phase period of the HSR, returns to its unactivated form. Binds to inverted 5'-NGAAN-3' pentamer DNA sequences. Binds to chromatin at heat shock gene promoters. Activates transcription of transcription factor FOXR1 which in turn activates transcription of the heat shock chaperones HSPA1A and HSPA6 and the antioxidant NADPH-dependent reductase DHRS2. Also serves several other functions independently of its transcriptional activity. Involved in the repression of Ras-induced transcriptional activation of the c-fos gene in heat-stressed cells. Positively regulates pre-mRNA 3'-end processing and polyadenylation of HSP70 mRNA upon heat-stressed cells in a symplekin (SYMPK)-dependent manner. Plays a role in nuclear export of stress-induced HSP70 mRNA. Plays a role in the regulation of mitotic progression. Also plays a role as a negative regulator of non-homologous end joining (NHEJ) repair activity in a DNA damage-dependent manner. Involved in stress-induced cancer cell proliferation in a IER5-dependent manner. Its function is as follows. (Microbial infection) Plays a role in latent human immunodeficiency virus (HIV-1) transcriptional reactivation. Binds to the HIV-1 long terminal repeat promoter (LTR) to reactivate viral transcription by recruiting cellular transcriptional elongation factors, such as CDK9, CCNT1 and EP300. In Homo sapiens (Human), this protein is Heat shock factor protein 1.